We begin with the raw amino-acid sequence, 369 residues long: 4-hydroxy-3-methylbut-2-en-1-yl diphosphate synthase (flavodoxin) (369 aa).

4 residues coordinate [4Fe-4S] cluster: C270, C273, C305, and E312.

The protein belongs to the IspG family. [4Fe-4S] cluster is required as a cofactor.

It catalyses the reaction (2E)-4-hydroxy-3-methylbut-2-enyl diphosphate + oxidized [flavodoxin] + H2O + 2 H(+) = 2-C-methyl-D-erythritol 2,4-cyclic diphosphate + reduced [flavodoxin]. It functions in the pathway isoprenoid biosynthesis; isopentenyl diphosphate biosynthesis via DXP pathway; isopentenyl diphosphate from 1-deoxy-D-xylulose 5-phosphate: step 5/6. In terms of biological role, converts 2C-methyl-D-erythritol 2,4-cyclodiphosphate (ME-2,4cPP) into 1-hydroxy-2-methyl-2-(E)-butenyl 4-diphosphate. This Pseudomonas fluorescens (strain SBW25) protein is 4-hydroxy-3-methylbut-2-en-1-yl diphosphate synthase (flavodoxin).